The primary structure comprises 135 residues: Small ribosomal subunit protein bS16 (135 aa).

A disordered region spans residues 106–135; sequence TERRQKRLVVKSRRRQAKKEAEGKAAGAEA. A compositionally biased stretch (basic residues) spans 109-122; that stretch reads RQKRLVVKSRRRQA.

Belongs to the bacterial ribosomal protein bS16 family.

The polypeptide is Small ribosomal subunit protein bS16 (Chlorobium phaeobacteroides (strain DSM 266 / SMG 266 / 2430)).